Consider the following 145-residue polypeptide: UPF0179 protein MmarC7_0952 (145 aa).

Belongs to the UPF0179 family.

The chain is UPF0179 protein MmarC7_0952 from Methanococcus maripaludis (strain C7 / ATCC BAA-1331).